We begin with the raw amino-acid sequence, 284 residues long: Ribosomal RNA small subunit methyltransferase A (284 aa).

Residues Asn-26, Leu-28, Gly-53, Glu-74, Asp-97, and Asn-127 each contribute to the S-adenosyl-L-methionine site.

Belongs to the class I-like SAM-binding methyltransferase superfamily. rRNA adenine N(6)-methyltransferase family. RsmA subfamily.

It is found in the cytoplasm. It catalyses the reaction adenosine(1518)/adenosine(1519) in 16S rRNA + 4 S-adenosyl-L-methionine = N(6)-dimethyladenosine(1518)/N(6)-dimethyladenosine(1519) in 16S rRNA + 4 S-adenosyl-L-homocysteine + 4 H(+). Functionally, specifically dimethylates two adjacent adenosines (A1518 and A1519) in the loop of a conserved hairpin near the 3'-end of 16S rRNA in the 30S particle. May play a critical role in biogenesis of 30S subunits. The polypeptide is Ribosomal RNA small subunit methyltransferase A (Anaeromyxobacter dehalogenans (strain 2CP-1 / ATCC BAA-258)).